We begin with the raw amino-acid sequence, 735 residues long: Protein argonaute (735 aa).

Residues Met-1 to Asp-94 form an N-terminal domain region. A linker L1 region spans residues Cys-95–Pro-180. Residues Trp-181–Ala-284 form a PAZ domain region. Residues Lys-285–Gly-369 are linker L2. The segment at Cys-370–Ile-498 is mid domain. Residues Gln-499–Val-735 form a PIWI domain region. Catalysis depends on residues Asp-516, Glu-550, Asp-584, and Asp-709. Residue Asp-516 participates in Mn(2+) binding. Mn(2+) is bound by residues Asp-584, Asp-709, and Val-735.

It belongs to the argonaute family. Long pAgo subfamily. In terms of assembly, copurifies with SSB proteins Synpcc7942_0079 and Synpcc7942_0301 as well as other proteins. The cofactor is Mn(2+).

Functionally, a DNA-guided ssDNA endonuclease that might play a role in defense against invading mobile genetic elements. Uses short ssDNA sequences as guides (gDNA) to bind complementary target strands, resulting in cleavage of the target DNA (tDNA). The cleavage site is 10 nucleotides (nt) downstream of the target residue base-paired with the 5'-end of the gDNA. Both 5'-P and 5'-OH gDNAs confer activity; a 5'-OH guide cleaves between nt 10-11 and nt 11-12. Guide DNA mismatches in the seed (nt 2-9) can enhance activity, mismatches 1-5 nt after the cleavage site block activity. Has no appreciable activity with guide RNA or on target RNA. In situ binds to 5'-phosphorylated DNA 14-20 nt in length; small DNA maps over the chromosome and plasmid with some preference for the replication origin and the probable termination site. Also has weak guide-independent nuclease activity on DNA called 'chopping'. Overexpression of wild-type or catalytically inactive mutant has no visible effect during growth under continuous high light for up to a month. The polypeptide is Protein argonaute (Synechococcus elongatus (strain ATCC 33912 / PCC 7942 / FACHB-805) (Anacystis nidulans R2)).